Consider the following 532-residue polypeptide: Tegument protein UL21 (532 aa).

The disordered stretch occupies residues 251-276 (SPSVSSAPPPSAPDASLPPPGLQEAA). The span at 257–276 (APPPSAPDASLPPPGLQEAA) shows a compositional bias: pro residues.

It belongs to the alphaherpesvirinae UL21 protein family. As to quaternary structure, interacts (via C-terminus) with UL16.

The protein localises to the virion tegument. The protein resides in the host cytoplasm. It is found in the host nucleus. Functionally, may participate in DNA packaging/capsid maturation events. Promotes efficient incorporation of tegument proteins UL46, UL49, and US3 into virions. May also play a role in capsid transport to the trans-Golgi network (TGN). The polypeptide is Tegument protein UL21 (Human herpesvirus 2 (strain HG52) (HHV-2)).